Consider the following 281-residue polypeptide: Acetyl-coenzyme A carboxylase carboxyl transferase subunit beta 2 (281 aa).

Residues 26 to 281 enclose the CoA carboxyltransferase N-terminal domain; it reads LLTRCPVCHE…TITQGGHQDV (256 aa). Zn(2+)-binding residues include Cys-30, Cys-33, Cys-48, and Cys-51. Residues 30–51 form a C4-type zinc finger; it reads CPVCHEDCYTQDLGEFKVCPHC.

This sequence belongs to the AccD/PCCB family. As to quaternary structure, acetyl-CoA carboxylase is a heterohexamer composed of biotin carboxyl carrier protein (AccB), biotin carboxylase (AccC) and two subunits each of ACCase subunit alpha (AccA) and ACCase subunit beta (AccD). Zn(2+) is required as a cofactor.

The protein resides in the cytoplasm. It catalyses the reaction N(6)-carboxybiotinyl-L-lysyl-[protein] + acetyl-CoA = N(6)-biotinyl-L-lysyl-[protein] + malonyl-CoA. It participates in lipid metabolism; malonyl-CoA biosynthesis; malonyl-CoA from acetyl-CoA: step 1/1. Its function is as follows. Component of the acetyl coenzyme A carboxylase (ACC) complex. Biotin carboxylase (BC) catalyzes the carboxylation of biotin on its carrier protein (BCCP) and then the CO(2) group is transferred by the transcarboxylase to acetyl-CoA to form malonyl-CoA. The polypeptide is Acetyl-coenzyme A carboxylase carboxyl transferase subunit beta 2 (Lactiplantibacillus plantarum (strain JDM1) (Lactobacillus plantarum)).